Consider the following 152-residue polypeptide: MSTKKIMLKSSEGKTFEIEEETARQCQTIAHMIEAECTDNVILVLKMTSEILEMVIEYCNKHHVDAANPCSDDDLEKWDKEFMEKDKSTIFALTNAANFLNNKSLLHLAGQTVADMIKGNTPKQMREFFNIENDLTPEEEAAIRRENKWAFE.

An interaction with the F-box domain of F-box proteins region spans residues 94-152 (TNAANFLNNKSLLHLAGQTVADMIKGNTPKQMREFFNIENDLTPEEEAAIRRENKWAFE).

This sequence belongs to the SKP1 family. Part of a SCF (SKP1-cullin-F-box) protein ligase complex. As to expression, restricted to siliques.

The protein resides in the nucleus. It functions in the pathway protein modification; protein ubiquitination. Its function is as follows. Involved in ubiquitination and subsequent proteasomal degradation of target proteins. Together with CUL1, RBX1 and a F-box protein, it forms a SCF E3 ubiquitin ligase complex. The functional specificity of this complex depends on the type of F-box protein. In the SCF complex, it serves as an adapter that links the F-box protein to CUL1. In Arabidopsis thaliana (Mouse-ear cress), this protein is SKP1-like protein 8 (ASK8).